An 85-amino-acid chain; its full sequence is Small ribosomal subunit protein uS17 (85 aa).

This sequence belongs to the universal ribosomal protein uS17 family. Part of the 30S ribosomal subunit.

Functionally, one of the primary rRNA binding proteins, it binds specifically to the 5'-end of 16S ribosomal RNA. This is Small ribosomal subunit protein uS17 from Citrifermentans bemidjiense (strain ATCC BAA-1014 / DSM 16622 / JCM 12645 / Bem) (Geobacter bemidjiensis).